Reading from the N-terminus, the 205-residue chain is Protein N-terminal glutamine amidohydrolase (205 aa).

Catalysis depends on residues Cys20, His74, and Asp90.

This sequence belongs to the NTAQ1 family. In terms of assembly, monomer.

The catalysed reaction is N-terminal L-glutaminyl-[protein] + H2O = N-terminal L-glutamyl-[protein] + NH4(+). Functionally, mediates the side-chain deamidation of N-terminal glutamine residues to glutamate, an important step in N-end rule pathway of protein degradation. Conversion of the resulting N-terminal glutamine to glutamate renders the protein susceptible to arginylation, polyubiquitination and degradation as specified by the N-end rule. Does not act on substrates with internal or C-terminal glutamine and does not act on non-glutamine residues in any position. This chain is Protein N-terminal glutamine amidohydrolase (tun), found in Drosophila grimshawi (Hawaiian fruit fly).